We begin with the raw amino-acid sequence, 113 residues long: Large ribosomal subunit protein P1 (113 aa).

Low complexity predominate over residues 56-66; that stretch reads TAAAAPAPAAG. Residues 56 to 113 form a disordered region; sequence TAAAAPAPAAGGSAGGEVEAADDDDEEDAEEEAADEGGDDDGDDDEEADGEGLGALFG. Positions 74 to 105 are enriched in acidic residues; that stretch reads EAADDDDEEDAEEEAADEGGDDDGDDDEEADG.

Belongs to the eukaryotic ribosomal protein P1/P2 family. In terms of assembly, part of the 50S ribosomal subunit. Homodimer, it forms part of the ribosomal stalk which helps the ribosome interact with GTP-bound translation factors. Forms a heptameric uL10/P0(P1)2(P1)2(P1)2 complex, where uL10/P0 forms an elongated spine to which the P1 dimers bind in a sequential fashion.

In terms of biological role, forms part of the ribosomal stalk, playing a central role in the interaction of the ribosome with GTP-bound translation factors. In Haloferax volcanii (strain ATCC 29605 / DSM 3757 / JCM 8879 / NBRC 14742 / NCIMB 2012 / VKM B-1768 / DS2) (Halobacterium volcanii), this protein is Large ribosomal subunit protein P1.